A 143-amino-acid chain; its full sequence is Large-conductance mechanosensitive channel (143 aa).

3 consecutive transmembrane segments (helical) span residues 10 to 30 (FAIK…GAFG), 40 to 60 (IIMP…QKFI), and 86 to 106 (GNFL…FLMV).

Belongs to the MscL family. As to quaternary structure, homopentamer.

The protein resides in the cell inner membrane. Functionally, channel that opens in response to stretch forces in the membrane lipid bilayer. May participate in the regulation of osmotic pressure changes within the cell. The protein is Large-conductance mechanosensitive channel of Acinetobacter baumannii (strain ATCC 17978 / DSM 105126 / CIP 53.77 / LMG 1025 / NCDC KC755 / 5377).